We begin with the raw amino-acid sequence, 55 residues long: MPQLDPAPWFSMLTVSWLIIFLLIMPTILFYQPQNTISTKQVTKPKQSTWTWPWH.

The chain crosses the membrane as a helical span at residues 4-24 (LDPAPWFSMLTVSWLIIFLLI).

Belongs to the ATPase protein 8 family. F-type ATPases have 2 components, CF(1) - the catalytic core - and CF(0) - the membrane proton channel.

The protein localises to the mitochondrion membrane. Its function is as follows. Mitochondrial membrane ATP synthase (F(1)F(0) ATP synthase or Complex V) produces ATP from ADP in the presence of a proton gradient across the membrane which is generated by electron transport complexes of the respiratory chain. F-type ATPases consist of two structural domains, F(1) - containing the extramembraneous catalytic core and F(0) - containing the membrane proton channel, linked together by a central stalk and a peripheral stalk. During catalysis, ATP synthesis in the catalytic domain of F(1) is coupled via a rotary mechanism of the central stalk subunits to proton translocation. Part of the complex F(0) domain. Minor subunit located with subunit a in the membrane. The sequence is that of ATP synthase protein 8 (MT-ATP8) from Petromyzon marinus (Sea lamprey).